Consider the following 240-residue polypeptide: Acyl-protein thioesterase 1 (240 aa).

Catalysis depends on charge relay system residues Ser129, Asp183, and His219.

This sequence belongs to the AB hydrolase superfamily. AB hydrolase 2 family.

Its subcellular location is the cytoplasm. It is found in the nucleus. The catalysed reaction is S-hexadecanoyl-L-cysteinyl-[protein] + H2O = L-cysteinyl-[protein] + hexadecanoate + H(+). Its function is as follows. Hydrolyzes fatty acids from S-acylated cysteine residues in proteins with a strong preference for palmitoylated G-alpha proteins over other acyl substrates. Mediates the deacylation of G-alpha proteins such as GPA1 in vivo, but has weak or no activity toward palmitoylated Ras proteins. Has weak lysophospholipase activity in vitro; however such activity may not exist in vivo. This chain is Acyl-protein thioesterase 1, found in Mycosarcoma maydis (Corn smut fungus).